The sequence spans 254 residues: Countin-2 (254 aa).

A signal peptide spans 1–19; sequence MMIKYITIAILFIASLVKA. One can recognise a Saposin B-type domain in the interval 22-107; it reads QFSLCPTCVD…EELTVCPKNQ (86 aa). Disulfide bonds link Cys26-Cys103, Cys29-Cys97, and Cys56-Cys68. N-linked (GlcNAc...) asparagine glycosylation is found at Asn110 and Asn219. Residues 231–254 are disordered; sequence QMTGTGSGSGSGSGSSSGAAYLRY. Gly residues predominate over residues 233-245; sequence TGTGSGSGSGSGS.

The protein belongs to the countin family.

The protein localises to the secreted. Functionally, cell-counting factor that limits the minimum size of the multicellular structure. May up-regulate the expression of both gp24 and gp80, which mediate cell adhesion. This Dictyostelium discoideum (Social amoeba) protein is Countin-2 (ctnB).